The primary structure comprises 155 residues: MTKQVEIFTDGSCLGNPGPGGYGVVLRYKQVEKTLAQGYRLTTNNRMEMMATIVALQALKEPCNVILTTDSQYVRQGITQWIHNWKKRGWKTADKKPVKNADLWQALDKETTRHTIDWRWVKGHAGHRENEMCDELARAAAENPTLDDTGYQPAE.

An RNase H type-1 domain is found at 1 to 142; it reads MTKQVEIFTD…CDELARAAAE (142 aa). Aspartate 10, glutamate 48, aspartate 70, and aspartate 134 together coordinate Mg(2+).

This sequence belongs to the RNase H family. As to quaternary structure, monomer. Mg(2+) serves as cofactor.

Its subcellular location is the cytoplasm. The catalysed reaction is Endonucleolytic cleavage to 5'-phosphomonoester.. Endonuclease that specifically degrades the RNA of RNA-DNA hybrids. This chain is Ribonuclease HI, found in Vibrio vulnificus (strain CMCP6).